A 557-amino-acid polypeptide reads, in one-letter code: Pre-mRNA-processing protein 45 (557 aa).

3 disordered regions span residues 1–32, 208–243, and 316–444; these read MALL…TSHA, EQDP…KVSA, and MAEK…MSSD. Over residues 16–25 the composition is skewed to acidic residues; that stretch reads DFDDEEEDYV. Positions 224-235 are enriched in pro residues; the sequence is RGPPSPPPPVLH. Phosphoserine occurs at positions 228 and 236. Residues 316-327 show a composition bias toward basic and acidic residues; sequence MAEKEKQEKEQR. Serine 376 is modified (phosphoserine). A compositionally biased stretch (basic and acidic residues) spans 386 to 430; sequence EAFRRRQELRRERRRQAEKDLRLSRMGAEKRAKLAEKDRPRDVAE.

It belongs to the SNW family. As to quaternary structure, homodimer. Interacts with cyp1 and the small 23 kDa subunit of the splicing factor U2AF (u2af23). Belongs to the 40S cdc5-associated complex (or cwf complex), a spliceosome sub-complex reminiscent of a late-stage spliceosome composed of the U2, U5 and U6 snRNAs and at least brr2, cdc5, cwf2/prp3, cwf3/syf1, cwf4/syf3, cwf5/ecm2, spp42/cwf6, cwf7/spf27, cwf8, cwf9, cwf10, cwf11, cwf12, prp45/cwf13, cwf14, cwf15, cwf16, cwf17, cwf18, cwf19, cwf20, cwf21, cwf22, cwf23, cwf24, cwf25, cwf26, cyp7/cwf27, cwf28, cwf29/ist3, lea1, msl1, prp5/cwf1, prp10, prp12/sap130, prp17, prp22, sap61, sap62, sap114, sap145, slu7, smb1, smd1, smd3, smf1, smg1 and syf2.

Its subcellular location is the nucleus. In terms of biological role, involved in pre-mRNA splicing. The sequence is that of Pre-mRNA-processing protein 45 (prp45) from Schizosaccharomyces pombe (strain 972 / ATCC 24843) (Fission yeast).